A 236-amino-acid chain; its full sequence is Concanavalin-Ma (236 aa).

Mn(2+)-binding residues include Glu8 and Asp10. The Ca(2+) site is built by Asp10, Tyr12, Asn14, and Asp19. Tyr12 provides a ligand contact to a carbohydrate. Mn(2+) contacts are provided by Asp19 and His24. 98–99 (LY) contributes to the a carbohydrate binding site. Asp207 serves as a coordination point for Ca(2+). Arg227 serves as a coordination point for a carbohydrate.

The protein belongs to the leguminous lectin family. In terms of assembly, homotetramer.

In terms of biological role, glucose/D-mannose specific lectin. The chain is Concanavalin-Ma from Canavalia rosea (Beach bean).